Here is a 105-residue protein sequence, read N- to C-terminus: RxLR effector protein PITG_18670 (105 aa).

The first 21 residues, 1 to 21 (MRSIFYFALAFAALTCSNASA), serve as a signal peptide directing secretion. The RxLR-dEER signature appears at 39–57 (RSLRVAGQEVARGDRGEEI).

This sequence belongs to the RxLR effector family.

It localises to the secreted. The protein resides in the host nucleus. The protein localises to the host nucleolus. It is found in the host cytoplasm. Its function is as follows. Effector that enhances P.infestans colonization of Nicotiana benthamiana leaves. In Phytophthora infestans (strain T30-4) (Potato late blight agent), this protein is RxLR effector protein PITG_18670.